The following is a 467-amino-acid chain: Glutamyl-tRNA reductase (467 aa).

Residues 49–52 (TCNR), Ser109, 114–116 (EQQ), and Gln120 each bind substrate. Cys50 serves as the catalytic Nucleophile. An NADP(+)-binding site is contributed by 189 to 194 (GAGAMG). Positions 446 to 467 (GFSDTTRYGTSPAQSSSKYHAE) are disordered. The segment covering 447–467 (FSDTTRYGTSPAQSSSKYHAE) has biased composition (polar residues).

It belongs to the glutamyl-tRNA reductase family. As to quaternary structure, homodimer.

It catalyses the reaction (S)-4-amino-5-oxopentanoate + tRNA(Glu) + NADP(+) = L-glutamyl-tRNA(Glu) + NADPH + H(+). It functions in the pathway porphyrin-containing compound metabolism; protoporphyrin-IX biosynthesis; 5-aminolevulinate from L-glutamyl-tRNA(Glu): step 1/2. In terms of biological role, catalyzes the NADPH-dependent reduction of glutamyl-tRNA(Glu) to glutamate 1-semialdehyde (GSA). The protein is Glutamyl-tRNA reductase of Mycobacterium leprae (strain TN).